The sequence spans 47 residues: Large ribosomal subunit protein bL34 (47 aa).

It belongs to the bacterial ribosomal protein bL34 family.

The polypeptide is Large ribosomal subunit protein bL34 (Rhodococcus opacus (strain B4)).